The chain runs to 177 residues: Cyclic pyranopterin monophosphate synthase 3 (177 aa).

Substrate contacts are provided by residues 79 to 81 (LCH) and 116 to 117 (ME). The active site involves D131. The tract at residues 150-177 (KSGGRSGHYRRHDADVKPSDGGSTEDGC) is disordered.

The protein belongs to the MoaC family. Homohexamer; trimer of dimers.

It catalyses the reaction (8S)-3',8-cyclo-7,8-dihydroguanosine 5'-triphosphate = cyclic pyranopterin phosphate + diphosphate. Its pathway is cofactor biosynthesis; molybdopterin biosynthesis. In terms of biological role, catalyzes the conversion of (8S)-3',8-cyclo-7,8-dihydroguanosine 5'-triphosphate to cyclic pyranopterin monophosphate (cPMP). The polypeptide is Cyclic pyranopterin monophosphate synthase 3 (moaC3) (Mycobacterium bovis (strain ATCC BAA-935 / AF2122/97)).